The chain runs to 366 residues: Phosphoserine aminotransferase (366 aa).

Residue R42 coordinates L-glutamate. Pyridoxal 5'-phosphate contacts are provided by residues 76 to 77 (AT), W101, T156, D178, and Q201. N6-(pyridoxal phosphate)lysine is present on K202. 243 to 244 (NT) provides a ligand contact to pyridoxal 5'-phosphate.

The protein belongs to the class-V pyridoxal-phosphate-dependent aminotransferase family. SerC subfamily. In terms of assembly, homodimer. Requires pyridoxal 5'-phosphate as cofactor.

It is found in the cytoplasm. The enzyme catalyses O-phospho-L-serine + 2-oxoglutarate = 3-phosphooxypyruvate + L-glutamate. It catalyses the reaction 4-(phosphooxy)-L-threonine + 2-oxoglutarate = (R)-3-hydroxy-2-oxo-4-phosphooxybutanoate + L-glutamate. It participates in amino-acid biosynthesis; L-serine biosynthesis; L-serine from 3-phospho-D-glycerate: step 2/3. The protein operates within cofactor biosynthesis; pyridoxine 5'-phosphate biosynthesis; pyridoxine 5'-phosphate from D-erythrose 4-phosphate: step 3/5. Functionally, catalyzes the reversible conversion of 3-phosphohydroxypyruvate to phosphoserine and of 3-hydroxy-2-oxo-4-phosphonooxybutanoate to phosphohydroxythreonine. The sequence is that of Phosphoserine aminotransferase from Aromatoleum aromaticum (strain DSM 19018 / LMG 30748 / EbN1) (Azoarcus sp. (strain EbN1)).